Consider the following 588-residue polypeptide: L-fucose isomerase (588 aa).

Active-site proton acceptor residues include E335 and D359. Mn(2+)-binding residues include E335, D359, and H525.

This sequence belongs to the L-fucose isomerase family. The cofactor is Mn(2+).

It is found in the cytoplasm. The enzyme catalyses L-fucose = L-fuculose. Its pathway is carbohydrate degradation; L-fucose degradation; L-lactaldehyde and glycerone phosphate from L-fucose: step 1/3. In terms of biological role, converts the aldose L-fucose into the corresponding ketose L-fuculose. In Streptococcus pneumoniae (strain JJA), this protein is L-fucose isomerase.